We begin with the raw amino-acid sequence, 347 residues long: Ribosomal RNA large subunit methyltransferase M (347 aa).

Residues S184, 217-220, D236, D256, and D272 each bind S-adenosyl-L-methionine; that span reads APGG. The active-site Proton acceptor is the K301.

Belongs to the class I-like SAM-binding methyltransferase superfamily. RNA methyltransferase RlmE family. RlmM subfamily. In terms of assembly, monomer.

Its subcellular location is the cytoplasm. The enzyme catalyses cytidine(2498) in 23S rRNA + S-adenosyl-L-methionine = 2'-O-methylcytidine(2498) in 23S rRNA + S-adenosyl-L-homocysteine + H(+). Its function is as follows. Catalyzes the 2'-O-methylation at nucleotide C2498 in 23S rRNA. This chain is Ribosomal RNA large subunit methyltransferase M, found in Xanthomonas oryzae pv. oryzae (strain MAFF 311018).